Consider the following 367-residue polypeptide: tRNA/tmRNA (uracil-C(5))-methyltransferase (367 aa).

S-adenosyl-L-methionine is bound by residues Gln190, Tyr218, Asn223, Glu239, and Asp299. Cys324 acts as the Nucleophile in catalysis. The Proton acceptor role is filled by Glu358.

This sequence belongs to the class I-like SAM-binding methyltransferase superfamily. RNA M5U methyltransferase family. TrmA subfamily.

It catalyses the reaction uridine(54) in tRNA + S-adenosyl-L-methionine = 5-methyluridine(54) in tRNA + S-adenosyl-L-homocysteine + H(+). It carries out the reaction uridine(341) in tmRNA + S-adenosyl-L-methionine = 5-methyluridine(341) in tmRNA + S-adenosyl-L-homocysteine + H(+). Dual-specificity methyltransferase that catalyzes the formation of 5-methyluridine at position 54 (m5U54) in all tRNAs, and that of position 341 (m5U341) in tmRNA (transfer-mRNA). The chain is tRNA/tmRNA (uracil-C(5))-methyltransferase from Serratia proteamaculans (strain 568).